Reading from the N-terminus, the 212-residue chain is Ribonuclease HII (212 aa).

The RNase H type-2 domain maps to serine 28–phenylalanine 212. A divalent metal cation is bound by residues aspartate 34, glutamate 35, and aspartate 127.

This sequence belongs to the RNase HII family. Mn(2+) serves as cofactor. The cofactor is Mg(2+).

It localises to the cytoplasm. The enzyme catalyses Endonucleolytic cleavage to 5'-phosphomonoester.. Its function is as follows. Endonuclease that specifically degrades the RNA of RNA-DNA hybrids. The chain is Ribonuclease HII from Chlamydia abortus (strain DSM 27085 / S26/3) (Chlamydophila abortus).